Consider the following 612-residue polypeptide: Threonine--tRNA ligase (612 aa).

Residues 218 to 509 are catalytic; the sequence is DHRKLGVELG…LSEHFGGNFP (292 aa). Zn(2+)-binding residues include C310, H361, and H486.

It belongs to the class-II aminoacyl-tRNA synthetase family. Homodimer. The cofactor is Zn(2+).

Its subcellular location is the cytoplasm. It carries out the reaction tRNA(Thr) + L-threonine + ATP = L-threonyl-tRNA(Thr) + AMP + diphosphate + H(+). Functionally, catalyzes the attachment of threonine to tRNA(Thr) in a two-step reaction: L-threonine is first activated by ATP to form Thr-AMP and then transferred to the acceptor end of tRNA(Thr). Also edits incorrectly charged L-seryl-tRNA(Thr). The protein is Threonine--tRNA ligase of Helicobacter pylori (strain HPAG1).